The following is a 386-amino-acid chain: Nucleosome assembly protein 1-like 4 (386 aa).

The tract at residues 1-29 (MADNSFSDGVPSDSLEAAKNASNTEKLTD) is disordered. Alanine 2 is modified (N-acetylalanine). Phosphoserine occurs at positions 5, 7, and 12. Over residues 20–29 (NASNTEKLTD) the composition is skewed to polar residues. The residue at position 49 (serine 49) is a Phosphoserine. Position 51 is a phosphothreonine (threonine 51). Phosphoserine occurs at positions 53 and 54. Threonine 58 is subject to Phosphothreonine. Lysine 105 carries the N6-acetyllysine modification. Residue serine 125 is modified to Phosphoserine. N6-acetyllysine is present on lysine 146. Positions 265 to 271 (IKKKQKH) match the Nuclear localization signal motif. Serine 304 bears the Phosphoserine mark. The span at 339 to 370 (AIEDDDNFEEGEEGEEEELEGDEEAEDDDDAE) shows a compositional bias: acidic residues. A disordered region spans residues 339–386 (AIEDDDNFEEGEEGEEEELEGDEEAEDDDDAEINPKKEPSQPSECKQQ).

Belongs to the nucleosome assembly protein (NAP) family. In terms of assembly, interacts with core (H2A, H2B, H3, H4) and linker (H1) histones. Post-translationally, polyglutamylated and polyglycylated. These 2 modifications occur exclusively on glutamate residues and result in either polyglutamate or polyglycine chains on the gamma-carboxyl group. Both modifications can coexist on the same protein on adjacent residues, and lowering polyglycylation levels increases polyglutamylation, and reciprocally. Polyglutamylated by TTLL4. Phosphorylated at the G0/G1 boundary but it is not phosphorylated in S-phase. Phosphorylated protein remains in the cytoplasm in a complex with histones during the G0/G1 transition, whereas dephosphorylation triggers its transport into the nucleus at the G1/S-boundary.

It localises to the nucleus. Its subcellular location is the cytoplasm. Acts as a histone chaperone in nucleosome assembly. This is Nucleosome assembly protein 1-like 4 (NAP1L4) from Bos taurus (Bovine).